The primary structure comprises 445 residues: Phosphoglucosamine mutase (445 aa).

Ser-99 functions as the Phosphoserine intermediate in the catalytic mechanism. Mg(2+) is bound by residues Ser-99, Asp-242, Asp-244, and Asp-246. Ser-99 carries the post-translational modification Phosphoserine.

The protein belongs to the phosphohexose mutase family. Mg(2+) serves as cofactor. In terms of processing, activated by phosphorylation.

It carries out the reaction alpha-D-glucosamine 1-phosphate = D-glucosamine 6-phosphate. Its function is as follows. Catalyzes the conversion of glucosamine-6-phosphate to glucosamine-1-phosphate. The chain is Phosphoglucosamine mutase from Helicobacter pylori (strain Shi470).